The sequence spans 240 residues: Phosphoribosyl isomerase A (240 aa).

Aspartate 11 serves as the catalytic Proton acceptor. Aspartate 130 acts as the Proton donor in catalysis.

Belongs to the HisA/HisF family. Monomer.

The protein resides in the cytoplasm. It catalyses the reaction 1-(5-phospho-beta-D-ribosyl)-5-[(5-phospho-beta-D-ribosylamino)methylideneamino]imidazole-4-carboxamide = 5-[(5-phospho-1-deoxy-D-ribulos-1-ylimino)methylamino]-1-(5-phospho-beta-D-ribosyl)imidazole-4-carboxamide. It carries out the reaction N-(5-phospho-beta-D-ribosyl)anthranilate = 1-(2-carboxyphenylamino)-1-deoxy-D-ribulose 5-phosphate. It functions in the pathway amino-acid biosynthesis; L-histidine biosynthesis; L-histidine from 5-phospho-alpha-D-ribose 1-diphosphate: step 4/9. The protein operates within amino-acid biosynthesis; L-tryptophan biosynthesis; L-tryptophan from chorismate: step 3/5. Catalyzes the isomerization of the aminoaldose moiety of ProFAR to the aminoketose of PRFAR in the biosynthesis pathway for histidine and the isomerization of the aminoaldose PRA to the aminoketose CdRP in the biosynthsis pathway for tryptophan. This chain is Phosphoribosyl isomerase A (priA), found in Streptomyces coelicolor (strain ATCC BAA-471 / A3(2) / M145).